Reading from the N-terminus, the 662-residue chain is DNA ligase (662 aa).

NAD(+) is bound by residues 34–38 (DYDYD), 83–84 (SI), and E113. The active-site N6-AMP-lysine intermediate is K115. NAD(+) is bound by residues R136, E172, K286, and K310. Zn(2+) contacts are provided by C404, C407, C422, and C427. The 80-residue stretch at 583 to 662 (RESSSCLGKT…NDLLKILYPN (80 aa)) folds into the BRCT domain.

Belongs to the NAD-dependent DNA ligase family. LigA subfamily. Mg(2+) is required as a cofactor. Requires Mn(2+) as cofactor.

It catalyses the reaction NAD(+) + (deoxyribonucleotide)n-3'-hydroxyl + 5'-phospho-(deoxyribonucleotide)m = (deoxyribonucleotide)n+m + AMP + beta-nicotinamide D-nucleotide.. DNA ligase that catalyzes the formation of phosphodiester linkages between 5'-phosphoryl and 3'-hydroxyl groups in double-stranded DNA using NAD as a coenzyme and as the energy source for the reaction. It is essential for DNA replication and repair of damaged DNA. The chain is DNA ligase from Chlamydia caviae (strain ATCC VR-813 / DSM 19441 / 03DC25 / GPIC) (Chlamydophila caviae).